We begin with the raw amino-acid sequence, 351 residues long: Inhibin beta C chain (351 aa).

The N-terminal stretch at 1–18 (MASSLLLALLFLTLATVV) is a signal peptide. Positions 19-236 (NLKTDGPCPA…EGKHRVRRRG (218 aa)) are excised as a propeptide. Residues Asn110, Asn142, and Asn160 are each glycosylated (N-linked (GlcNAc...) asparagine). Intrachain disulfides connect Cys239–Cys247, Cys246–Cys316, Cys275–Cys348, and Cys279–Cys350.

The protein belongs to the TGF-beta family. In terms of assembly, homodimeric or heterodimeric through association with alpha and beta subunits, linked by one or more disulfide bonds. Inhibins are heterodimers of one alpha and one beta subunit. Activins are homo- or heterodimers of beta subunits only.

The protein resides in the secreted. In terms of biological role, inhibins and activins inhibit and activate, respectively, the secretion of follitropin by the pituitary gland. Inhibins/activins are involved in regulating a number of diverse functions such as hypothalamic and pituitary hormone secretion, gonadal hormone secretion, germ cell development and maturation, erythroid differentiation, insulin secretion, nerve cell survival, embryonic axial development or bone growth, depending on their subunit composition. Inhibins appear to oppose the functions of activins. The sequence is that of Inhibin beta C chain (Inhbc) from Rattus norvegicus (Rat).